The following is a 299-amino-acid chain: Ribosomal RNA small subunit methyltransferase H (299 aa).

S-adenosyl-L-methionine-binding positions include 24-26, D43, F68, D90, and Q97; that span reads GGH.

It belongs to the methyltransferase superfamily. RsmH family.

The protein localises to the cytoplasm. It carries out the reaction cytidine(1402) in 16S rRNA + S-adenosyl-L-methionine = N(4)-methylcytidine(1402) in 16S rRNA + S-adenosyl-L-homocysteine + H(+). Specifically methylates the N4 position of cytidine in position 1402 (C1402) of 16S rRNA. This chain is Ribosomal RNA small subunit methyltransferase H, found in Francisella tularensis subsp. tularensis (strain WY96-3418).